Reading from the N-terminus, the 122-residue chain is Cytochrome b-c1 complex subunit 7-1, mitochondrial (122 aa).

This sequence belongs to the UQCRB/QCR7 family. Component of the ubiquinol-cytochrome c oxidoreductase (cytochrome b-c1 complex, complex III, CIII), a multisubunit enzyme composed of 10 subunits. The complex is composed of 3 respiratory subunits cytochrome b (MT-CYB), cytochrome c1 (CYC1-1 or CYC1-2) and Rieske protein (UCR1-1 or UCR1-2), 2 core protein subunits MPPalpha1 (or MPPalpha2) and MPPB, and 5 low-molecular weight protein subunits QCR7-1 (or QCR7-2), UCRQ-1 (or UCRQ-2), QCR9, UCRY and probably QCR6-1 (or QCR6-2). The complex exists as an obligatory dimer and forms supercomplexes (SCs) in the inner mitochondrial membrane with NADH-ubiquinone oxidoreductase (complex I, CI), resulting in different assemblies (supercomplexes SCI(1)III(2) and SCI(2)III(4)).

Its subcellular location is the mitochondrion inner membrane. Component of the ubiquinol-cytochrome c oxidoreductase, a multisubunit transmembrane complex that is part of the mitochondrial electron transport chain which drives oxidative phosphorylation. The respiratory chain contains 3 multisubunit complexes succinate dehydrogenase (complex II, CII), ubiquinol-cytochrome c oxidoreductase (cytochrome b-c1 complex, complex III, CIII) and cytochrome c oxidase (complex IV, CIV), that cooperate to transfer electrons derived from NADH and succinate to molecular oxygen, creating an electrochemical gradient over the inner membrane that drives transmembrane transport and the ATP synthase. The cytochrome b-c1 complex catalyzes electron transfer from ubiquinol to cytochrome c, linking this redox reaction to translocation of protons across the mitochondrial inner membrane, with protons being carried across the membrane as hydrogens on the quinol. In the process called Q cycle, 2 protons are consumed from the matrix, 4 protons are released into the intermembrane space and 2 electrons are passed to cytochrome c. The chain is Cytochrome b-c1 complex subunit 7-1, mitochondrial (QCR7-1) from Arabidopsis thaliana (Mouse-ear cress).